We begin with the raw amino-acid sequence, 249 residues long: Aquaporin (249 aa).

At 1–11 (MTRKWIKKLQS) the chain is on the cytoplasmic side. The helical transmembrane segment at 12-32 (YIGEFFASFIFGFAVYTSIIG) threads the bilayer. The Extracellular portion of the chain corresponds to 33–39 (SAQTGQS). A helical transmembrane segment spans residues 40-60 (AGPIIVALTIALSGVAIIYSF). The Cytoplasmic portion of the chain corresponds to 61–83 (CDITVAHFNPAITFSAMCFRRLP). Positions 69-71 (NPA) match the NPA motif. A helical transmembrane segment spans residues 84 to 104 (FFGGIFIIIFQVAGFIIAGLA). Topologically, residues 105-133 (SVAVLPGKYKNKLEIARPKRVADNVSRGR) are extracellular. Residues 134 to 154 (IFGTEFFLTAILVYVAFAVGV) traverse the membrane as a helical segment. Residues 155 to 179 (NPYTPPKDEHGDQLDPDEGLTEGRK) lie on the Cytoplasmic side of the membrane. Residues 180-200 (ITAPLAIGFTLGFCALLGIAS) form a helical membrane-spanning segment. The Extracellular segment spans residues 201 to 223 (SGGAFNPGIVLSPMILTGTWDFW). An NPG motif is present at residues 206–208 (NPG). Residues 224–246 (WVYLLGQFSGGLLGGGLQRFLLY) traverse the membrane as a helical segment. At 247 to 249 (KIF) the chain is on the cytoplasmic side.

Belongs to the MIP/aquaporin (TC 1.A.8) family.

It is found in the cell membrane. Functionally, water channel required to facilitate the transport of water across membranes. Involved in osmotolerance. This chain is Aquaporin (AQP), found in Vairimorpha ceranae (strain BRL01) (Microsporidian parasite).